The chain runs to 352 residues: Protein-glutamate methylesterase/protein-glutamine glutaminase 2 (352 aa).

The Response regulatory domain maps to 6–124 (KVLIVEDSLV…NAGYDTMAAK (119 aa)). 4-aspartylphosphate is present on D57. The CheB-type methylesterase domain maps to 162–343 (PGTYSMVGIV…LPLPAIAARL (182 aa)). Residues S173, H200, and D292 contribute to the active site.

It belongs to the CheB family. In terms of processing, phosphorylated by CheA. Phosphorylation of the N-terminal regulatory domain activates the methylesterase activity.

The protein resides in the cytoplasm. The enzyme catalyses [protein]-L-glutamate 5-O-methyl ester + H2O = L-glutamyl-[protein] + methanol + H(+). It carries out the reaction L-glutaminyl-[protein] + H2O = L-glutamyl-[protein] + NH4(+). In terms of biological role, involved in chemotaxis. Part of a chemotaxis signal transduction system that modulates chemotaxis in response to various stimuli. Catalyzes the demethylation of specific methylglutamate residues introduced into the chemoreceptors (methyl-accepting chemotaxis proteins or MCP) by CheR. Also mediates the irreversible deamidation of specific glutamine residues to glutamic acid. This Paramagnetospirillum magneticum (strain ATCC 700264 / AMB-1) (Magnetospirillum magneticum) protein is Protein-glutamate methylesterase/protein-glutamine glutaminase 2.